Reading from the N-terminus, the 270-residue chain is Formamidopyrimidine-DNA glycosylase (270 aa).

Pro-2 functions as the Schiff-base intermediate with DNA in the catalytic mechanism. Glu-3 functions as the Proton donor in the catalytic mechanism. The active-site Proton donor; for beta-elimination activity is the Lys-58. His-90, Arg-109, and Arg-152 together coordinate DNA. The segment at Arg-237–Lys-270 adopts an FPG-type zinc-finger fold. Arg-260 serves as the catalytic Proton donor; for delta-elimination activity.

Belongs to the FPG family. Monomer. Zn(2+) serves as cofactor.

The catalysed reaction is Hydrolysis of DNA containing ring-opened 7-methylguanine residues, releasing 2,6-diamino-4-hydroxy-5-(N-methyl)formamidopyrimidine.. The enzyme catalyses 2'-deoxyribonucleotide-(2'-deoxyribose 5'-phosphate)-2'-deoxyribonucleotide-DNA = a 3'-end 2'-deoxyribonucleotide-(2,3-dehydro-2,3-deoxyribose 5'-phosphate)-DNA + a 5'-end 5'-phospho-2'-deoxyribonucleoside-DNA + H(+). Involved in base excision repair of DNA damaged by oxidation or by mutagenic agents. Acts as a DNA glycosylase that recognizes and removes damaged bases. Has a preference for oxidized purines, such as 7,8-dihydro-8-oxoguanine (8-oxoG). Has AP (apurinic/apyrimidinic) lyase activity and introduces nicks in the DNA strand. Cleaves the DNA backbone by beta-delta elimination to generate a single-strand break at the site of the removed base with both 3'- and 5'-phosphates. This is Formamidopyrimidine-DNA glycosylase from Rhizorhabdus wittichii (strain DSM 6014 / CCUG 31198 / JCM 15750 / NBRC 105917 / EY 4224 / RW1) (Sphingomonas wittichii).